We begin with the raw amino-acid sequence, 353 residues long: Photosystem II D2 protein (353 aa).

Thr2 carries the N-acetylthreonine modification. Thr2 is subject to Phosphothreonine. The helical transmembrane segment at 41–61 (CAYFALGGWFTGTTFVTSWYT) threads the bilayer. Residue His118 coordinates chlorophyll a. A helical transmembrane segment spans residues 125 to 141 (GFMLRQFELARSVQLRP). Pheophytin a contacts are provided by Gln130 and Asn143. Residues 153–166 (VFVSVFLIYPLGQS) form a helical membrane-spanning segment. Position 198 (His198) interacts with chlorophyll a. A helical membrane pass occupies residues 208-228 (AALLCAIHGATVENTLFEDGD). Residues His215 and Phe262 each contribute to the a plastoquinone site. Residue His215 coordinates Fe cation. His269 contacts Fe cation. The chain crosses the membrane as a helical span at residues 279-295 (GLWMSALGVVGLALNLR).

This sequence belongs to the reaction center PufL/M/PsbA/D family. As to quaternary structure, PSII is composed of 1 copy each of membrane proteins PsbA, PsbB, PsbC, PsbD, PsbE, PsbF, PsbH, PsbI, PsbJ, PsbK, PsbL, PsbM, PsbT, PsbX, PsbY, PsbZ, Psb30/Ycf12, at least 3 peripheral proteins of the oxygen-evolving complex and a large number of cofactors. It forms dimeric complexes. The cofactor is The D1/D2 heterodimer binds P680, chlorophylls that are the primary electron donor of PSII, and subsequent electron acceptors. It shares a non-heme iron and each subunit binds pheophytin, quinone, additional chlorophylls, carotenoids and lipids. There is also a Cl(-1) ion associated with D1 and D2, which is required for oxygen evolution. The PSII complex binds additional chlorophylls, carotenoids and specific lipids..

The protein localises to the plastid. The protein resides in the chloroplast thylakoid membrane. It catalyses the reaction 2 a plastoquinone + 4 hnu + 2 H2O = 2 a plastoquinol + O2. Photosystem II (PSII) is a light-driven water:plastoquinone oxidoreductase that uses light energy to abstract electrons from H(2)O, generating O(2) and a proton gradient subsequently used for ATP formation. It consists of a core antenna complex that captures photons, and an electron transfer chain that converts photonic excitation into a charge separation. The D1/D2 (PsbA/PsbD) reaction center heterodimer binds P680, the primary electron donor of PSII as well as several subsequent electron acceptors. D2 is needed for assembly of a stable PSII complex. The chain is Photosystem II D2 protein from Dioscorea elephantipes (Elephant's foot yam).